The sequence spans 156 residues: Small ribosomal subunit protein uS7 (156 aa).

It belongs to the universal ribosomal protein uS7 family. Part of the 30S ribosomal subunit. Contacts proteins S9 and S11.

One of the primary rRNA binding proteins, it binds directly to 16S rRNA where it nucleates assembly of the head domain of the 30S subunit. Is located at the subunit interface close to the decoding center, probably blocks exit of the E-site tRNA. The chain is Small ribosomal subunit protein uS7 from Campylobacter concisus (strain 13826).